Consider the following 198-residue polypeptide: NADH-quinone oxidoreductase subunit I (198 aa).

2 consecutive 4Fe-4S ferredoxin-type domains span residues 42 to 72 and 88 to 117; these read LNRW…VEGA and RVYE…MTND. Positions 52, 55, 58, 62, 97, 100, 103, and 107 each coordinate [4Fe-4S] cluster. The segment at 137–198 is disordered; the sequence is APLKEGMEQP…DTQHKDEEAA (62 aa). Over residues 182-198 the composition is skewed to basic and acidic residues; it reads AHRDDDNDTQHKDEEAA.

Belongs to the complex I 23 kDa subunit family. NDH-1 is composed of 14 different subunits. Subunits NuoA, H, J, K, L, M, N constitute the membrane sector of the complex. It depends on [4Fe-4S] cluster as a cofactor.

The protein localises to the cell membrane. It carries out the reaction a quinone + NADH + 5 H(+)(in) = a quinol + NAD(+) + 4 H(+)(out). In terms of biological role, NDH-1 shuttles electrons from NADH, via FMN and iron-sulfur (Fe-S) centers, to quinones in the respiratory chain. The immediate electron acceptor for the enzyme in this species is believed to be ubiquinone. Couples the redox reaction to proton translocation (for every two electrons transferred, four hydrogen ions are translocated across the cytoplasmic membrane), and thus conserves the redox energy in a proton gradient. This chain is NADH-quinone oxidoreductase subunit I, found in Cutibacterium acnes (strain DSM 16379 / KPA171202) (Propionibacterium acnes).